The chain runs to 377 residues: Sterol 24-C-methyltransferase erg6 (377 aa).

Belongs to the class I-like SAM-binding methyltransferase superfamily. Erg6/SMT family.

Its subcellular location is the microsome. It localises to the mitochondrion. It carries out the reaction lanosterol + S-adenosyl-L-methionine = eburicol + S-adenosyl-L-homocysteine + H(+). The protein operates within steroid metabolism; ergosterol biosynthesis. Its activity is regulated as follows. Specific and total activity is decreased in presence of alpha-bisabolol. Functionally, sterol 24-C-methyltransferase; part of the third module of ergosterol biosynthesis pathway that includes the late steps of the pathway. Methylates lanosterol at C-24 to produce eburicol. The third module or late pathway involves the ergosterol synthesis itself through consecutive reactions that mainly occur in the endoplasmic reticulum (ER) membrane. Firstly, the squalene synthase erg9 catalyzes the condensation of 2 farnesyl pyrophosphate moieties to form squalene, which is the precursor of all steroids. Squalene synthase is crucial for balancing the incorporation of farnesyl diphosphate (FPP) into sterol and nonsterol isoprene synthesis. Secondly, squalene is converted into lanosterol by the consecutive action of the squalene epoxidase erg1 and the lanosterol synthase erg7. Then, the delta(24)-sterol C-methyltransferase erg6 methylates lanosterol at C-24 to produce eburicol. Eburicol is the substrate of the sterol 14-alpha demethylase encoded by cyp51A and cyp51B, to yield 4,4,24-trimethyl ergosta-8,14,24(28)-trienol. The C-14 reductase erg24 then reduces the C14=C15 double bond which leads to 4,4-dimethylfecosterol. A sequence of further demethylations at C-4, involving the C-4 demethylation complex containing the C-4 methylsterol oxidases erg25A or erg25B, the sterol-4-alpha-carboxylate 3-dehydrogenase erg26 and the 3-keto-steroid reductase erg27, leads to the production of fecosterol via 4-methylfecosterol. The C-8 sterol isomerase erg2 then catalyzes the reaction which results in unsaturation at C-7 in the B ring of sterols and thus converts fecosterol to episterol. The sterol-C5-desaturase erg3B then catalyzes the introduction of a C-5 double bond in the B ring to produce 5-dehydroepisterol. The 2 other sterol-C5-desaturases, erg3A and erg3C, seem to be less important in ergosterol biosynthesis. The C-22 sterol desaturase erg5 further converts 5-dehydroepisterol into ergosta-5,7,22,24(28)-tetraen-3beta-ol by forming the C-22(23) double bond in the sterol side chain. Finally, ergosta-5,7,22,24(28)-tetraen-3beta-ol is substrate of the C-24(28) sterol reductases erg4A and erg4B to produce ergosterol. Possible alternative sterol biosynthetic pathways might exist from fecosterol to ergosterol, depending on the activities of the erg3 isoforms. This chain is Sterol 24-C-methyltransferase erg6, found in Aspergillus fumigatus (strain ATCC MYA-4609 / CBS 101355 / FGSC A1100 / Af293) (Neosartorya fumigata).